Here is a 602-residue protein sequence, read N- to C-terminus: DNA mismatch repair protein MutL (602 aa).

The protein belongs to the DNA mismatch repair MutL/HexB family.

In terms of biological role, this protein is involved in the repair of mismatches in DNA. It is required for dam-dependent methyl-directed DNA mismatch repair. May act as a 'molecular matchmaker', a protein that promotes the formation of a stable complex between two or more DNA-binding proteins in an ATP-dependent manner without itself being part of a final effector complex. In Baumannia cicadellinicola subsp. Homalodisca coagulata, this protein is DNA mismatch repair protein MutL.